Here is a 132-residue protein sequence, read N- to C-terminus: Small ribosomal subunit protein uS8 (132 aa).

The protein belongs to the universal ribosomal protein uS8 family. In terms of assembly, part of the 30S ribosomal subunit. Contacts proteins S5 and S12.

One of the primary rRNA binding proteins, it binds directly to 16S rRNA central domain where it helps coordinate assembly of the platform of the 30S subunit. The chain is Small ribosomal subunit protein uS8 from Mycobacterium leprae (strain Br4923).